Consider the following 148-residue polypeptide: Cuticle protein 8 (148 aa).

5 tandem repeats follow at residues 16–19 (AAPA), Ala-22, 28–31 (AAPV), 37–40 (AAPA), and 44–47 (AAPV). The region spanning 58 to 128 (YPKYEFNYGV…RTPGTHPVAV (71 aa)) is the Chitin-binding type R&amp;R domain.

Functionally, component of the cuticle of migratory locust which contains more than 100 different structural proteins. This Locusta migratoria (Migratory locust) protein is Cuticle protein 8.